The chain runs to 376 residues: MHEKFTFTLKSTSGGARLGEVAMPRGVIRTPAFMPVGTVGTVKAMYLDQVRELGADIILGNTYHLMLRPGPERVARLGGLHELIRWPHPILTDSGGFQVMSLSGLRKLDEKGVTFKSHVDGSLHHMSPERSIEIQGMLDSDIQMQLDECIALPAERKEIERAMEMSLRWAERCRVAFGEQPGKAMFGIVQGGDQPDLRIRSAEGLKELDLKGYAVGGLAVGEPQDVMLGMLDITLPVLPTEKPRYLMGVGTPDDILKSVARGIDMFDCVMPTRSGRHGLAFTRRGRVNIRNARHAEDMRPLDEQSNCPASRDYSRAYLHHLTRSNEALGGMLLSWHNLAYYQELMQGIRTSIEEGRFADFYAETIEMWARGDIDPV.

The active-site Proton acceptor is Asp-93. Residues 93 to 97 (DSGGF), Asp-147, Gln-190, and Gly-217 each bind substrate. Residues 248–254 (GVGTPDD) are RNA binding. The active-site Nucleophile is the Asp-267. The interval 272–276 (TRSGR) is RNA binding; important for wobble base 34 recognition.

This sequence belongs to the queuine tRNA-ribosyltransferase family. Homodimer. Within each dimer, one monomer is responsible for RNA recognition and catalysis, while the other monomer binds to the replacement base PreQ1.

It catalyses the reaction 7-aminomethyl-7-carbaguanine + guanosine(34) in tRNA = 7-aminomethyl-7-carbaguanosine(34) in tRNA + guanine. It functions in the pathway tRNA modification; tRNA-queuosine biosynthesis. Functionally, catalyzes the base-exchange of a guanine (G) residue with the queuine precursor 7-aminomethyl-7-deazaguanine (PreQ1) at position 34 (anticodon wobble position) in tRNAs with GU(N) anticodons (tRNA-Asp, -Asn, -His and -Tyr). Catalysis occurs through a double-displacement mechanism. The nucleophile active site attacks the C1' of nucleotide 34 to detach the guanine base from the RNA, forming a covalent enzyme-RNA intermediate. The proton acceptor active site deprotonates the incoming PreQ1, allowing a nucleophilic attack on the C1' of the ribose to form the product. After dissociation, two additional enzymatic reactions on the tRNA convert PreQ1 to queuine (Q), resulting in the hypermodified nucleoside queuosine (7-(((4,5-cis-dihydroxy-2-cyclopenten-1-yl)amino)methyl)-7-deazaguanosine). The sequence is that of Queuine tRNA-ribosyltransferase from Agrobacterium fabrum (strain C58 / ATCC 33970) (Agrobacterium tumefaciens (strain C58)).